A 339-amino-acid chain; its full sequence is Lipoyl synthase (339 aa).

The disordered stretch occupies residues 13-35 (RPKLDAPARPRHPEKAHRPDTAI). C68, C73, C79, C94, C98, C101, and S307 together coordinate [4Fe-4S] cluster. In terms of domain architecture, Radical SAM core spans 80–296 (WEKRHATFMI…ETTAYAKGFL (217 aa)).

It belongs to the radical SAM superfamily. Lipoyl synthase family. [4Fe-4S] cluster serves as cofactor.

The protein resides in the cytoplasm. It carries out the reaction [[Fe-S] cluster scaffold protein carrying a second [4Fe-4S](2+) cluster] + N(6)-octanoyl-L-lysyl-[protein] + 2 oxidized [2Fe-2S]-[ferredoxin] + 2 S-adenosyl-L-methionine + 4 H(+) = [[Fe-S] cluster scaffold protein] + N(6)-[(R)-dihydrolipoyl]-L-lysyl-[protein] + 4 Fe(3+) + 2 hydrogen sulfide + 2 5'-deoxyadenosine + 2 L-methionine + 2 reduced [2Fe-2S]-[ferredoxin]. It functions in the pathway protein modification; protein lipoylation via endogenous pathway; protein N(6)-(lipoyl)lysine from octanoyl-[acyl-carrier-protein]: step 2/2. Its function is as follows. Catalyzes the radical-mediated insertion of two sulfur atoms into the C-6 and C-8 positions of the octanoyl moiety bound to the lipoyl domains of lipoate-dependent enzymes, thereby converting the octanoylated domains into lipoylated derivatives. This Methylorubrum extorquens (strain CM4 / NCIMB 13688) (Methylobacterium extorquens) protein is Lipoyl synthase.